We begin with the raw amino-acid sequence, 687 residues long: Amine oxidase [copper-containing] gamma 2 (687 aa).

The signal sequence occupies residues 1–24 (MVELSFSQLLVLLLSLLFLFTTLA). N-linked (GlcNAc...) asparagine glycosylation occurs at N154. C169 and C191 form a disulfide bridge. N244 is a glycosylation site (N-linked (GlcNAc...) asparagine). 333–344 (YMDAGEFGLGPS) serves as a coordination point for substrate. The Proton acceptor role is filled by D335. C354 and C380 are joined by a disulfide. 420–425 (VGNYDY) lines the substrate pocket. Residue Y423 is the Schiff-base intermediate with substrate; via topaquinone of the active site. Y423 bears the 2',4',5'-topaquinone mark. Residues H480 and H482 each coordinate Cu cation. Residues D489, M490, and D491 each coordinate Mn(2+). N-linked (GlcNAc...) asparagine glycans are attached at residues N497 and N598. Residues D632 and I633 each contribute to the Mn(2+) site. Residue H643 participates in Cu cation binding.

It belongs to the copper/topaquinone oxidase family. Homodimer. The cofactor is Cu cation. Zn(2+) serves as cofactor. L-topaquinone is required as a cofactor. Requires Mn(2+) as cofactor. In terms of processing, topaquinone (TPQ) is generated by copper-dependent autoxidation of a specific tyrosyl residue. As to expression, expressed in roots, leaves and cotyledons.

The protein localises to the secreted. It is found in the extracellular space. The protein resides in the apoplast. The catalysed reaction is a primary methyl amine + O2 + H2O = an aldehyde + H2O2 + NH4(+). The protein operates within amine and polyamine degradation; putrescine degradation. Its function is as follows. Copper amine oxidase that can use putrescine and spermidine as substrates. The protein is Amine oxidase [copper-containing] gamma 2 of Arabidopsis thaliana (Mouse-ear cress).